The primary structure comprises 529 residues: Ectonucleoside triphosphate diphosphohydrolase 3 (529 aa).

The Cytoplasmic portion of the chain corresponds to 1–22 (MFTVLTRQPCEQAGLKALYRTP). A helical membrane pass occupies residues 23–43 (TIIALVVLLVSIVVLVSITVI). Topologically, residues 44 to 485 (QIHKQEVLPP…PLIRLPIEPP (442 aa)) are extracellular. N81 carries an N-linked (GlcNAc...) asparagine glycan. A disulfide bridge links C92 with C116. Residue N149 is glycosylated (N-linked (GlcNAc...) asparagine). Residue E182 is the Proton acceptor of the active site. Position 222-226 (222-226 (GASTQ)) interacts with ATP. N238 carries an N-linked (GlcNAc...) asparagine glycan. Intrachain disulfides connect C261–C308, C289–C334, and C347–C353. N-linked (GlcNAc...) asparagine glycans are attached at residues N381, N392, N402, and N454. Residues C399 and C422 are joined by a disulfide bond. Residues 486–506 (VFVGTLAFFTAAALLCLAFLA) traverse the membrane as a helical segment. The Cytoplasmic segment spans residues 507–529 (YLCSATRRKRHSEHAFDHAVDSD).

This sequence belongs to the GDA1/CD39 NTPase family. Ca(2+) is required as a cofactor. It depends on Mg(2+) as a cofactor. As to expression, expressed in adult brain, pancreas, spleen and prostate. Moderate or low expression is seen in most tissues. Not expressed in liver and peripheral blood leukocytes.

Its subcellular location is the cell membrane. The catalysed reaction is a ribonucleoside 5'-triphosphate + 2 H2O = a ribonucleoside 5'-phosphate + 2 phosphate + 2 H(+). Has a threefold preference for the hydrolysis of ATP over ADP. The protein is Ectonucleoside triphosphate diphosphohydrolase 3 (ENTPD3) of Homo sapiens (Human).